The following is a 534-amino-acid chain: Serine/threonine-protein kinase 35 (534 aa).

Residues Val32–Val176 are disordered. Low complexity-rich tracts occupy residues Gly39–Ala65 and Pro166–Val176. Residues Tyr202 to Val530 enclose the Protein kinase domain. Residues Ile208–Val216 and Lys231 contribute to the ATP site. The active-site Proton acceptor is the Asp360.

The protein belongs to the protein kinase superfamily. Ser/Thr protein kinase family. As to quaternary structure, interacts with PDLIM1/CLP-36. In terms of processing, autophosphorylated. As to expression, expressed in testis.

It is found in the nucleus. It localises to the nucleolus. The protein localises to the cytoplasm. It carries out the reaction L-seryl-[protein] + ATP = O-phospho-L-seryl-[protein] + ADP + H(+). It catalyses the reaction L-threonyl-[protein] + ATP = O-phospho-L-threonyl-[protein] + ADP + H(+). This chain is Serine/threonine-protein kinase 35 (STK35), found in Homo sapiens (Human).